The following is a 599-amino-acid chain: Putative fused cobalt transport protein CbiMQ (599 aa).

Residues 1–239 (MHIMEGFLPS…LLPSSDQNLS (239 aa)) form a cbiM region. The next 16 helical transmembrane spans lie at 12-32 (WWQFWALLAVVCVLAGMAALI), 44-64 (LLGLAGACVFILSSLKLPSVG), 74-94 (FGAILFGPAVCSVFCTIVLVF), 106-126 (TLGANIISMGVAGPLAACIIF), 140-160 (SFSVTVFCAAAAADLVTYMMT), 162-182 (LQLALAYPAAEGGVLASFVVY), 183-203 (LGIFSITQVPLAVLEGILIVL), 247-267 (IIAGIIVVLLTASLAFLLAGL), 303-323 (WLFALQAGIGAAVLVFCLYLL), 356-376 (QVSAWLKLLFCLSAIIIGVTS), 377-397 (PLPYLPLFIAGVMIFAALIIA), 407-427 (LLTIPLVFAGTGAAVILLITG), 438-458 (IGAFHFQITTTSLELAALVLS), 463-483 (GMCSLYFLTLTTPITSLFSVL), 493-513 (IDLSMLIYRYIFVFIGEAIAI), and 579-599 (MAVFLFIALIFGLLCAEMLLL). Residues 341-599 (DEHILDDVAI…GLLCAEMLLL (259 aa)) form a cbiQ region.

It in the N-terminal section; belongs to the CbiM family. The protein in the C-terminal section; belongs to the CbiQ family. Forms an energy-coupling factor (ECF) transporter complex composed of an ATP-binding protein (A component, CbiO), a transmembrane protein (T component, CbiQ) and 2 possible substrate-capture proteins (S components, CbiM and CbiN) of unknown stoichimetry.

Its subcellular location is the cell membrane. It participates in cofactor biosynthesis; adenosylcobalamin biosynthesis. Its function is as follows. Part of the energy-coupling factor (ECF) transporter complex CbiMNOQ involved in cobalt import. This chain is Putative fused cobalt transport protein CbiMQ (cbiMQ), found in Methanocorpusculum labreanum (strain ATCC 43576 / DSM 4855 / Z).